A 258-amino-acid polypeptide reads, in one-letter code: Short-chain dehydrogenase chyC (258 aa).

The NADP(+) site is built by R37, D55, N81, Y154, K158, V185, and T187. Y154 functions as the Proton donor in the catalytic mechanism. The active-site Lowers pKa of active site Tyr is the K158.

This sequence belongs to the short-chain dehydrogenases/reductases (SDR) family.

Its function is as follows. Short-chain dehydrogenase; part of the gene cluster that mediates the biosynthesis of the yellow pigment chrysogine. the NRPS chyA mediates the condensation of anthranilic acid and alanine into the intermediate 2-(2-aminopropanamido)benzoic acid. The remainder of the pathway is highly branched yielding at least 13 chrysogine-related compounds. The malonyl transferase chyE converts 2-(2-aminopropanamido)benzoic acid and 2-(2-aminopropanamido)benzamidine into 2-(2-(2-carboxyacetamido)propanamido)benzoic acid and 3-((1-((2-carbamoylphenyl)amino)-1-oxopropan-2-yl)amino)-3-oxopropanoic acid, respectively. ChyD is an amidase, being responsible for the amidation of the carboxylic acid moiety of 2-(2-aminopropanamido)benzoic acid, 2-(2-(2-carboxyacetamido)propanamido)benzoic acid and 2-(2-((4-amino-1-carboxy-4-oxobutyl)amino)propanamido)benzoic acid. ChyC is involved in the same reactions as ChyD, but plays a more minor role in the amidation reactions compared to chyD. The oxidoreductases chyH and chyM are involved in oxidation reactions that form N-pyruvoylanthranilamide from 2-(2-aminopropanamido)benzamidine and (1-((2-carbamoylphenyl)amino)-1-oxopropan-2-yl)glutamine, respectively. N-pyruvoylanthranilamide is further converted via two further branches in the pathway, yielding chrysogine and additional chrysogine-related coumpounds. Chrysogine is likely formed by a spontaneous ring closure from N-pyruvoylanthranilamide. The polypeptide is Short-chain dehydrogenase chyC (Penicillium rubens (strain ATCC 28089 / DSM 1075 / NRRL 1951 / Wisconsin 54-1255) (Penicillium chrysogenum)).